Reading from the N-terminus, the 95-residue chain is Mitochondrial import inner membrane translocase subunit Tim13 (95 aa).

Methionine 1 is subject to N-acetylmethionine. Serine 7 is subject to Phosphoserine. Residues 46-69 (CFRKCIGKPGGSLDNSEQKCIAMC) carry the Twin CX3C motif motif. Disulfide bonds link cysteine 46–cysteine 69 and cysteine 50–cysteine 65. The residue at position 53 (lysine 53) is an N6-succinyllysine.

It belongs to the small Tim family. In terms of assembly, heterohexamer; composed of 3 copies of TIMM8 (TIMM8A or TIMM8B) and 3 copies of TIMM13, named soluble 70 kDa complex. Associates with the TIM22 complex, whose core is composed of TIMM22. Present at high level in liver and brain, and at lower level in muscle and heart. In CNS sections, it is predominantly present in the soma and the dendritic portion of the Purkinje cells of the cerebellum, but not in the glial cells. Scattered expression also is also detected in the brain stem, olfactory bulb, substantia nigra, hippocampus and striatum (at protein level).

It is found in the mitochondrion inner membrane. Functionally, mitochondrial intermembrane chaperone that participates in the import and insertion of some multi-pass transmembrane proteins into the mitochondrial inner membrane. Also required for the transfer of beta-barrel precursors from the TOM complex to the sorting and assembly machinery (SAM complex) of the outer membrane. Acts as a chaperone-like protein that protects the hydrophobic precursors from aggregation and guide them through the mitochondrial intermembrane space. The TIMM8-TIMM13 complex mediates the import of proteins such as TIMM23, SLC25A12/ARALAR1 and SLC25A13/ARALAR2, while the predominant TIMM9-TIMM10 70 kDa complex mediates the import of much more proteins. In Mus musculus (Mouse), this protein is Mitochondrial import inner membrane translocase subunit Tim13 (Timm13).